A 301-amino-acid chain; its full sequence is 2-methylisocitrate lyase (301 aa).

Residue 53 to 55 (SGA) coordinates substrate. The Mg(2+) site is built by Asp-92 and Asp-94. Residues 129-130 (CG), Arg-162, Glu-192, 214-216 (NMT), Arg-245, and Arg-274 each bind substrate.

This sequence belongs to the isocitrate lyase/PEP mutase superfamily. Methylisocitrate lyase family. Mg(2+) serves as cofactor.

The enzyme catalyses 3-hydroxybutane-1,2,3-tricarboxylate = pyruvate + succinate. Involved in the methylcitric acid cycle. Catalyzes the cleavage of 2-methylisocitrate to yield pyruvate and succinate. The protein is 2-methylisocitrate lyase of Bacillus subtilis (strain 168).